Consider the following 539-residue polypeptide: Phosphoenolpyruvate carboxykinase (ATP) (539 aa).

Residues arginine 64, tyrosine 206, and lysine 212 each coordinate substrate. ATP-binding positions include lysine 212, histidine 231, and 247–255 (GLSGTGKTT). The Mn(2+) site is built by lysine 212 and histidine 231. Aspartate 268 is a Mn(2+) binding site. ATP contacts are provided by residues glutamate 296, arginine 332, 448 to 449 (RI), and threonine 454. Arginine 332 contributes to the substrate binding site.

It belongs to the phosphoenolpyruvate carboxykinase (ATP) family. In terms of assembly, monomer. Mn(2+) is required as a cofactor.

It is found in the cytoplasm. It catalyses the reaction oxaloacetate + ATP = phosphoenolpyruvate + ADP + CO2. It functions in the pathway carbohydrate biosynthesis; gluconeogenesis. Involved in the gluconeogenesis. Catalyzes the conversion of oxaloacetate (OAA) to phosphoenolpyruvate (PEP) through direct phosphoryl transfer between the nucleoside triphosphate and OAA. The protein is Phosphoenolpyruvate carboxykinase (ATP) of Salmonella gallinarum (strain 287/91 / NCTC 13346).